The primary structure comprises 241 residues: DNA repair protein RecO (241 aa).

This sequence belongs to the RecO family.

Functionally, involved in DNA repair and RecF pathway recombination. The chain is DNA repair protein RecO from Yersinia pseudotuberculosis serotype O:1b (strain IP 31758).